Reading from the N-terminus, the 139-residue chain is Acidic phospholipase A2 DE-I (139 aa).

The signal sequence occupies residues 1–16 (MRTLWIMAVLLLGVEG). 7 cysteine pairs are disulfide-bonded: C42–C132, C44–C60, C59–C111, C65–C139, C66–C104, C73–C97, and C91–C102. Ca(2+) contacts are provided by Y43, G45, and G47. H63 is an active-site residue. D64 provides a ligand contact to Ca(2+). The active site involves D105.

It depends on Ca(2+) as a cofactor. As to expression, expressed by the venom gland.

It is found in the secreted. The catalysed reaction is a 1,2-diacyl-sn-glycero-3-phosphocholine + H2O = a 1-acyl-sn-glycero-3-phosphocholine + a fatty acid + H(+). Its function is as follows. Snake venom phospholipase A2 (PLA2) that inhibits the ADP- and collagen-induced human platelet aggregation. Exhibits high hydrolytic activities and preferred the anionic micelles to the zwitterionic micelles. PLA2 catalyzes the calcium-dependent hydrolysis of the 2-acyl groups in 3-sn-phosphoglycerides. The polypeptide is Acidic phospholipase A2 DE-I (Ovophis okinavensis (Ryukyu Island pit viper)).